The following is a 554-amino-acid chain: 2-succinyl-5-enolpyruvyl-6-hydroxy-3-cyclohexene-1-carboxylate synthase (554 aa).

It belongs to the TPP enzyme family. MenD subfamily. As to quaternary structure, homodimer. It depends on Mg(2+) as a cofactor. Mn(2+) is required as a cofactor. Requires thiamine diphosphate as cofactor.

It catalyses the reaction isochorismate + 2-oxoglutarate + H(+) = 5-enolpyruvoyl-6-hydroxy-2-succinyl-cyclohex-3-ene-1-carboxylate + CO2. Its pathway is quinol/quinone metabolism; 1,4-dihydroxy-2-naphthoate biosynthesis; 1,4-dihydroxy-2-naphthoate from chorismate: step 2/7. The protein operates within quinol/quinone metabolism; menaquinone biosynthesis. Its function is as follows. Catalyzes the thiamine diphosphate-dependent decarboxylation of 2-oxoglutarate and the subsequent addition of the resulting succinic semialdehyde-thiamine pyrophosphate anion to isochorismate to yield 2-succinyl-5-enolpyruvyl-6-hydroxy-3-cyclohexene-1-carboxylate (SEPHCHC). The chain is 2-succinyl-5-enolpyruvyl-6-hydroxy-3-cyclohexene-1-carboxylate synthase from Flavobacterium johnsoniae (strain ATCC 17061 / DSM 2064 / JCM 8514 / BCRC 14874 / CCUG 350202 / NBRC 14942 / NCIMB 11054 / UW101) (Cytophaga johnsonae).